Here is a 429-residue protein sequence, read N- to C-terminus: Glutamyl-tRNA reductase (429 aa).

Substrate is bound by residues 50 to 53, S108, 113 to 115, and Q119; these read TCNR and EPQ. Catalysis depends on C51, which acts as the Nucleophile. 188 to 193 is an NADP(+) binding site; it reads GAGEMI.

This sequence belongs to the glutamyl-tRNA reductase family. As to quaternary structure, homodimer.

The enzyme catalyses (S)-4-amino-5-oxopentanoate + tRNA(Glu) + NADP(+) = L-glutamyl-tRNA(Glu) + NADPH + H(+). Its pathway is porphyrin-containing compound metabolism; protoporphyrin-IX biosynthesis; 5-aminolevulinate from L-glutamyl-tRNA(Glu): step 1/2. Catalyzes the NADPH-dependent reduction of glutamyl-tRNA(Glu) to glutamate 1-semialdehyde (GSA). The protein is Glutamyl-tRNA reductase of Polaromonas naphthalenivorans (strain CJ2).